Here is a 173-residue protein sequence, read N- to C-terminus: Photosystem I assembly protein Ycf3 (173 aa).

3 TPR repeats span residues alanine 35–proline 68, serine 72–methionine 105, and glycine 120–asparagine 153.

It belongs to the Ycf3 family.

The protein resides in the cellular thylakoid membrane. In terms of biological role, essential for the assembly of the photosystem I (PSI) complex. May act as a chaperone-like factor to guide the assembly of the PSI subunits. This Synechocystis sp. (strain ATCC 27184 / PCC 6803 / Kazusa) protein is Photosystem I assembly protein Ycf3.